We begin with the raw amino-acid sequence, 486 residues long: MTDLVKLTIAQSHKLLKDRKISSAELTKAHLERIEKLEPEIKAFMTVCPETALSQAEAADKAIKQGDIRPLTGIPMALKDVLCTKGIRTTCSSKMLENFVPPYNAHVVDKLAKEGAVLLGKTNMDEFAMGSSTENSAYFTTRNPWNTDKVPGGSSGGSAACVAASEAVFSLGSDTGGSIRQPASFCSVTGYKPSYGMVSRYGLVAFASSLDQIGPFTKDAMDCALVMNAIAGFDDRDSTSVPQTVPDFNSGLDGNIKGFKLGVPKEYFSQNMRPDITEKINDALGVLSGLGASIDREVSLPHTPYALAVYYILAPSEASANLSRYDGVKYGYSYNQTENMWEAMEKTRAKGFGSEVKRRIMIGTYALSAGYYDAWYVKAQKVRTLISQEFNNAFEKYDALITPTTPNLPFSIGEKLNDPFEMYMCDTCTIPINIAGLPAVSIPAGFVDGLPVGLQIIGKPFADQTIMRIAHAFQCATTWHKETPRL.

Active-site charge relay system residues include Lys79 and Ser154. Ser178 acts as the Acyl-ester intermediate in catalysis.

It belongs to the amidase family. GatA subfamily. Heterotrimer of A, B and C subunits.

It carries out the reaction L-glutamyl-tRNA(Gln) + L-glutamine + ATP + H2O = L-glutaminyl-tRNA(Gln) + L-glutamate + ADP + phosphate + H(+). Its function is as follows. Allows the formation of correctly charged Gln-tRNA(Gln) through the transamidation of misacylated Glu-tRNA(Gln) in organisms which lack glutaminyl-tRNA synthetase. The reaction takes place in the presence of glutamine and ATP through an activated gamma-phospho-Glu-tRNA(Gln). This is Glutamyl-tRNA(Gln) amidotransferase subunit A from Dehalococcoides mccartyi (strain CBDB1).